The chain runs to 192 residues: Pyridoxal 5'-phosphate synthase subunit PdxT (192 aa).

Position 47-49 (47-49 (GES)) interacts with L-glutamine. C79 acts as the Nucleophile in catalysis. Residues R106 and 134 to 135 (IR) contribute to the L-glutamine site. Active-site charge relay system residues include H170 and E172.

This sequence belongs to the glutaminase PdxT/SNO family. As to quaternary structure, in the presence of PdxS, forms a dodecamer of heterodimers. Only shows activity in the heterodimer.

It catalyses the reaction aldehydo-D-ribose 5-phosphate + D-glyceraldehyde 3-phosphate + L-glutamine = pyridoxal 5'-phosphate + L-glutamate + phosphate + 3 H2O + H(+). The catalysed reaction is L-glutamine + H2O = L-glutamate + NH4(+). It participates in cofactor biosynthesis; pyridoxal 5'-phosphate biosynthesis. Its function is as follows. Catalyzes the hydrolysis of glutamine to glutamate and ammonia as part of the biosynthesis of pyridoxal 5'-phosphate. The resulting ammonia molecule is channeled to the active site of PdxS. The protein is Pyridoxal 5'-phosphate synthase subunit PdxT of Anoxybacillus flavithermus (strain DSM 21510 / WK1).